A 473-amino-acid polypeptide reads, in one-letter code: Sensor histidine kinase YclK (473 aa).

The Cytoplasmic segment spans residues 1–9; that stretch reads MMKIKYLYQ. The chain crosses the membrane as a helical span at residues 10–30; that stretch reads LLLSHISILILAFVIIISLFS. Topologically, residues 31 to 164 are extracellular; sequence HFVKEFAYQN…GVEQMVNQVN (134 aa). A helical membrane pass occupies residues 165–185; the sequence is LYMFYAVISTLVITILVSWLL. Over 186 to 473 the chain is Cytoplasmic; that stretch reads SKFHVKRIQK…IRLPLTAKQQ (288 aa). The HAMP domain maps to 187 to 239; sequence KFHVKRIQKLREATDKVASGDYDIHLENSYGDEIGVLASDFNIMAKKLKQSRD. The 217-residue stretch at 254–470 folds into the Histidine kinase domain; that stretch reads DVSHELKTPL…KFIIRLPLTA (217 aa). H257 carries the phosphohistidine; by autocatalysis modification.

It localises to the cell membrane. The enzyme catalyses ATP + protein L-histidine = ADP + protein N-phospho-L-histidine.. Its function is as follows. Could be member of the two-component regulatory system YclK/YclJ. Potentially phosphorylates YclJ. The polypeptide is Sensor histidine kinase YclK (yclK) (Bacillus subtilis (strain 168)).